A 378-amino-acid chain; its full sequence is Probable cytochrome oxidase subunit 2 (378 aa).

Residues 1–8 lie on the Cytoplasmic side of the membrane; the sequence is MIDYEFLR. Residues 9-28 form a helical membrane-spanning segment; sequence FIWWVLVIVLLIGFSVTDGF. Residues 29 to 79 are Periplasmic-facing; the sequence is DMGVTALLPVIGKKEVERRIMINTIAPHWDGNQVWLLTAGGAIFAAWPIVY. The chain crosses the membrane as a helical span at residues 80-99; that stretch reads AVSFSGFYIALVLVLAALFL. Residues 100–122 are Cytoplasmic-facing; it reads RPLGFEYRAKIDNPTWRSVWDWG. Residues 123 to 142 form a helical membrane-spanning segment; that stretch reads LFAGGFVPALVFGVAFGNLL. Residues 143 to 164 lie on the Periplasmic side of the membrane; the sequence is QGVPFHFNELTQVTYTGSFFEL. The chain crosses the membrane as a helical span at residues 165–184; sequence LNPFALLCGVISLSMLVTHG. Residues 185–205 are Cytoplasmic-facing; the sequence is ANWLQMKTTEALRDRARTVSQ. A helical membrane pass occupies residues 206–224; the sequence is IGSIVTLIAFVLAGVWLYS. At 225–261 the chain is on the periplasmic side; it reads KDGYVVTSTIDHFAPSSPMNKEVAVETGAWFRNFNEM. The helical transmembrane segment at 262-281 threads the bilayer; that stretch reads PILWIFPALAVVAALLNAAF. At 282–291 the chain is on the cytoplasmic side; the sequence is SKANRCGFAF. Residues 292–311 form a helical membrane-spanning segment; the sequence is FFSALTMAGVIITAAVSMFP. The Periplasmic portion of the chain corresponds to 312 to 335; the sequence is FVMPSSSHPEQSLLMWDSTSSELT. The chain crosses the membrane as a helical span at residues 336–355; that stretch reads LTLMLIFAVVFVVIALAYTI. The Cytoplasmic segment spans residues 356 to 378; that stretch reads WSYSKMFGRLDANFIDKNKHSLY.

This sequence belongs to the cytochrome ubiquinol oxidase subunit 2 family. As to quaternary structure, heterodimer of subunits I and II.

It is found in the cell inner membrane. Its function is as follows. Probable cytochrome oxidase subunit. The polypeptide is Probable cytochrome oxidase subunit 2 (Haemophilus influenzae (strain ATCC 51907 / DSM 11121 / KW20 / Rd)).